Reading from the N-terminus, the 207-residue chain is Superoxide dismutase [Mn] (207 aa).

The Mn(2+) site is built by histidine 28, histidine 76, aspartate 160, and histidine 164.

It belongs to the iron/manganese superoxide dismutase family. The cofactor is Mn(2+).

The catalysed reaction is 2 superoxide + 2 H(+) = H2O2 + O2. Destroys superoxide anion radicals which are normally produced within the cells and which are toxic to biological systems. This chain is Superoxide dismutase [Mn] (sodA), found in Mycobacterium avium.